Reading from the N-terminus, the 135-residue chain is Large ribosomal subunit protein eL32 (135 aa).

This sequence belongs to the eukaryotic ribosomal protein eL32 family.

The protein is Large ribosomal subunit protein eL32 of Methanococcus maripaludis (strain C6 / ATCC BAA-1332).